We begin with the raw amino-acid sequence, 62 residues long: Amolopin-P2 (62 aa).

The N-terminal stretch at 1–22 is a signal peptide; sequence MFTLKKSLLLLFFLGTISLSLC. A propeptide spanning residues 23 to 44 is cleaved from the precursor; the sequence is EQERGADEEENGGEVTEQEVKR.

It belongs to the frog skin active peptide (FSAP) family. Amolopin subfamily. Expressed by the skin glands.

Its subcellular location is the secreted. In terms of biological role, antimicrobial peptide with activity against Gram-positive bacteria. Has been tested against S.aureus (MIC=37.5 ug/mL), against B.pumilus (MIC=75.0 ug/mL), B.cereus (no activity detected). Does not show activity against Gram-negative bacteria (E.coli, B.dysenteriae, A.calcoaceticus, P.aeruginosa) and fungi (C.albicans). Does not show hemolytic activity against rabbit erythrocytes. In Amolops loloensis (Lolokou Sucker Frog), this protein is Amolopin-P2.